Here is a 152-residue protein sequence, read N- to C-terminus: UPF0756 membrane protein JDM1_1594 (152 aa).

Transmembrane regions (helical) follow at residues 25–45, 52–72, 85–105, and 115–135; these read ATVVVLLIKLIPNTSKLLTTI, WGVTVITVAILIPIATGQIGF, WIAVACGVLVSVLSFHGVGLL, and LVFGTIMGVVLLKGIAAGPII.

This sequence belongs to the UPF0756 family.

Its subcellular location is the cell membrane. In Lactiplantibacillus plantarum (strain JDM1) (Lactobacillus plantarum), this protein is UPF0756 membrane protein JDM1_1594.